The following is a 423-amino-acid chain: Glucose-1-phosphate adenylyltransferase (423 aa).

Residues Y108, G173, 188-189 (EK), and S207 contribute to the alpha-D-glucose 1-phosphate site.

The protein belongs to the bacterial/plant glucose-1-phosphate adenylyltransferase family. Homotetramer.

It carries out the reaction alpha-D-glucose 1-phosphate + ATP + H(+) = ADP-alpha-D-glucose + diphosphate. It functions in the pathway glycan biosynthesis; glycogen biosynthesis. Functionally, involved in the biosynthesis of ADP-glucose, a building block required for the elongation reactions to produce glycogen. Catalyzes the reaction between ATP and alpha-D-glucose 1-phosphate (G1P) to produce pyrophosphate and ADP-Glc. The protein is Glucose-1-phosphate adenylyltransferase of Francisella tularensis subsp. novicida (strain U112).